The primary structure comprises 304 residues: Arginine-binding protein ArgT (304 aa).

A signal peptide spans 1-26 (MRFPKIPKRAVAATVGIVATSFTLAS). A lipid anchor (N-palmitoyl cysteine) is attached at cysteine 27. Cysteine 27 is lipidated: S-diacylglycerol cysteine.

It belongs to the bacterial solute-binding protein 3 family. The complex is probably composed of two ATP-binding proteins (ArgV), two transmembrane proteins (ArgU) and a solute-binding protein (ArgT).

Its subcellular location is the cell membrane. Functionally, part of the ABC transporter complex ArgTUV involved in L-arginine import. May also transport L-citrulline. Binds L-arginine and its molecular precursor L-citrulline, but not L-histidine, L-glutamate, L-glutamine, L-lysine or L-cysteine. In Corynebacterium glutamicum (strain ATCC 13032 / DSM 20300 / JCM 1318 / BCRC 11384 / CCUG 27702 / LMG 3730 / NBRC 12168 / NCIMB 10025 / NRRL B-2784 / 534), this protein is Arginine-binding protein ArgT.